We begin with the raw amino-acid sequence, 671 residues long: Phospholipid:diacylglycerol acyltransferase 1 (671 aa).

The tract at residues 1–46 (MPLIHRKKPTEKPSTPPSEEVVHDEDSQKKPHESSKSHHKKSNGGG) is disordered. The Cytoplasmic portion of the chain corresponds to 1-54 (MPLIHRKKPTEKPSTPPSEEVVHDEDSQKKPHESSKSHHKKSNGGGKWSCIDSC). Basic and acidic residues predominate over residues 20–36 (EVVHDEDSQKKPHESSK). Residues 55 to 75 (CWFIGCVCVTWWFLLFLYNAM) form a helical membrane-spanning segment. Residues 76-671 (PASFPQYVTE…EWSERIDLKL (596 aa)) are Lumenal-facing. Asparagine 161 carries an N-linked (GlcNAc...) asparagine glycan. Residue serine 254 is the Acyl-ester intermediate of the active site. Residues asparagine 381 and asparagine 434 are each glycosylated (N-linked (GlcNAc...) asparagine). Catalysis depends on charge relay system residues aspartate 573 and histidine 626. Asparagine 647 carries an N-linked (GlcNAc...) asparagine glycan.

Belongs to the AB hydrolase superfamily. Lipase family. As to expression, ubiquitous. Highest expression in young developing seeds.

Its subcellular location is the membrane. It carries out the reaction a glycerophospholipid + a 1,2-diacyl-sn-glycerol = a monoacylglycerophospholipid + a triacyl-sn-glycerol. It functions in the pathway glycerolipid metabolism; triacylglycerol biosynthesis. In terms of biological role, triacylglycerol formation by an acyl-CoA independent pathway. The enzyme preferentially transfers acyl groups from the sn-2 position of a phospholipid to diacylglycerol, thus forming an sn-1-lysophospholipid. Involved in epoxy and hydroxy fatty acid accumulation in seeds. Has complementary functions with DAG1 that are essential for triacylglycerol synthesis and normal development of both seeds and pollen. This Arabidopsis thaliana (Mouse-ear cress) protein is Phospholipid:diacylglycerol acyltransferase 1 (PDAT1).